The following is a 1957-amino-acid chain: Chromatin modification-related protein EAF1 A (1957 aa).

4 disordered regions span residues Ala-108–Val-208, Asn-261–Thr-287, Gly-323–Asn-373, and Asn-449–Lys-469. Positions Ser-140–Leu-151 are enriched in basic and acidic residues. Composition is skewed to polar residues over residues Asn-261–Thr-270, Gly-333–Asn-342, and Thr-355–Ala-372. One can recognise an HSA domain in the interval Cys-563–Ser-641. 2 disordered regions span residues Gly-833–Lys-909 and Ala-928–Trp-950. A compositionally biased stretch (polar residues) spans Thr-884–Tyr-898. The SANT domain occupies Ser-1049–Lys-1105. Disordered regions lie at residues Ala-1107–Pro-1131, Thr-1282–Ser-1314, Leu-1344–His-1367, Gln-1449–Asn-1644, Pro-1687–Ala-1768, Glu-1804–Ser-1840, and Ser-1876–Glu-1957. 6 stretches are compositionally biased toward polar residues: residues Asp-1116 to Ser-1125, Ala-1290 to Ser-1314, Leu-1344 to Ala-1358, Ser-1459 to Val-1472, Leu-1479 to Leu-1492, and Gln-1501 to Gln-1510. 2 stretches are compositionally biased toward low complexity: residues Gln-1523 to Gln-1534 and Val-1545 to Gln-1562. Positions Thr-1563–Pro-1579 are enriched in pro residues. Composition is skewed to polar residues over residues Asn-1582 to Gln-1595, Ser-1604 to Lys-1618, Arg-1635 to Asn-1644, Asp-1691 to Pro-1722, and Gln-1734 to Leu-1758. A compositionally biased stretch (low complexity) spans Ser-1759 to Ala-1768. Residues Leu-1805–Pro-1815 show a composition bias toward basic and acidic residues. 2 stretches are compositionally biased toward polar residues: residues Gln-1819 to Thr-1832 and Ser-1876 to Leu-1894. Basic and acidic residues-rich tracts occupy residues Ser-1913–Glu-1922 and Leu-1932–Glu-1942.

It belongs to the EAF1 family. In terms of assembly, component of the NuA4 histone acetyltransferase complex. Interacts with ARP4 and SWC4, and (via HSA domain) with TAF14 and TAF14B. In terms of tissue distribution, expressed in leaves.

Its subcellular location is the nucleus. Its function is as follows. Component of the NuA4 histone acetyltransferase complex which is involved in transcriptional activation of selected genes principally by acetylation of nucleosomal histone H4 and H2A. This is Chromatin modification-related protein EAF1 A (EAF1A) from Arabidopsis thaliana (Mouse-ear cress).